Consider the following 199-residue polypeptide: Holliday junction resolvase RecU (199 aa).

Residues T82, D84, E97, and Q116 each coordinate Mg(2+).

The protein belongs to the RecU family. The cofactor is Mg(2+).

The protein localises to the cytoplasm. The enzyme catalyses Endonucleolytic cleavage at a junction such as a reciprocal single-stranded crossover between two homologous DNA duplexes (Holliday junction).. Endonuclease that resolves Holliday junction intermediates in genetic recombination. Cleaves mobile four-strand junctions by introducing symmetrical nicks in paired strands. Promotes annealing of linear ssDNA with homologous dsDNA. Required for DNA repair, homologous recombination and chromosome segregation. In Streptococcus pyogenes serotype M1, this protein is Holliday junction resolvase RecU.